Here is a 302-residue protein sequence, read N- to C-terminus: UDP-3-O-acyl-N-acetylglucosamine deacetylase (302 aa).

The Zn(2+) site is built by H78, H235, and D239. H262 acts as the Proton donor in catalysis.

The protein belongs to the LpxC family. Requires Zn(2+) as cofactor.

The enzyme catalyses a UDP-3-O-[(3R)-3-hydroxyacyl]-N-acetyl-alpha-D-glucosamine + H2O = a UDP-3-O-[(3R)-3-hydroxyacyl]-alpha-D-glucosamine + acetate. The protein operates within glycolipid biosynthesis; lipid IV(A) biosynthesis; lipid IV(A) from (3R)-3-hydroxytetradecanoyl-[acyl-carrier-protein] and UDP-N-acetyl-alpha-D-glucosamine: step 2/6. In terms of biological role, catalyzes the hydrolysis of UDP-3-O-myristoyl-N-acetylglucosamine to form UDP-3-O-myristoylglucosamine and acetate, the committed step in lipid A biosynthesis. The sequence is that of UDP-3-O-acyl-N-acetylglucosamine deacetylase from Bdellovibrio bacteriovorus (strain ATCC 15356 / DSM 50701 / NCIMB 9529 / HD100).